Reading from the N-terminus, the 404-residue chain is Protein translocase subunit SecD (404 aa).

6 consecutive transmembrane segments (helical) span residues 7–27 (HYIWLFLVIFVPALILYFNKV), 239–259 (LIALGVISVFMIAIYKIPGIV), 262–282 (IALLINGVLVLGLLSGIGAAL), 283–303 (TLPGIAGFILTLGMAVDSNVI), 330–350 (FPAIIDGNITTLLVAAVLFFL), and 357–377 (GFAVTLSLGVVATIITGVFVS).

The protein belongs to the SecD/SecF family. SecD subfamily. In terms of assembly, forms a complex with SecF. Part of the essential Sec protein translocation apparatus which comprises SecA, SecYEG and auxiliary proteins SecDF. Other proteins may also be involved.

It localises to the cell inner membrane. Functionally, part of the Sec protein translocase complex. Interacts with the SecYEG preprotein conducting channel. SecDF uses the proton motive force (PMF) to complete protein translocation after the ATP-dependent function of SecA. This chain is Protein translocase subunit SecD, found in Leptotrichia buccalis (strain ATCC 14201 / DSM 1135 / JCM 12969 / NCTC 10249 / C-1013-b).